A 363-amino-acid polypeptide reads, in one-letter code: Aminomethyltransferase (363 aa).

Belongs to the GcvT family. The glycine cleavage system is composed of four proteins: P, T, L and H.

It catalyses the reaction N(6)-[(R)-S(8)-aminomethyldihydrolipoyl]-L-lysyl-[protein] + (6S)-5,6,7,8-tetrahydrofolate = N(6)-[(R)-dihydrolipoyl]-L-lysyl-[protein] + (6R)-5,10-methylene-5,6,7,8-tetrahydrofolate + NH4(+). Its function is as follows. The glycine cleavage system catalyzes the degradation of glycine. The polypeptide is Aminomethyltransferase (Dechloromonas aromatica (strain RCB)).